The following is a 634-amino-acid chain: Ankyrin repeat and SOCS box protein 2 (634 aa).

A UIM domain is found at 26-45; it reads SEEELVQMAIEQSLADKTRG. Positions 35 to 81 are disordered; it reads IEQSLADKTRGPTPAETSVSSQTNHQPGHIHPWTRSSSPPESPPARA. Polar residues predominate over residues 49-60; the sequence is AETSVSSQTNHQ. ANK repeat units lie at residues 104-133, 137-167, 171-200, 204-233, 237-266, 270-299, 303-332, 336-365, 368-397, 410-439, 440-469, and 476-504; these read AAMD…NLAE, EGWL…TIDQ, QEET…EPDI, SRET…DANH, RGWT…KVEA, YSIT…DINT, DSAS…DANK, DGLL…RTRV, SGIS…DVNT, RRTS…DPNR, DVIS…NIDA, and TAFP…DGEP. Residue S371 is modified to Phosphoserine. An SOCS box domain is found at 580 to 634; the sequence is EDWAVIKEKAEPPRPLAHLCRLRVRKAIGKYRIKLLDTLPLPGRLIRYLKYENTQ.

This sequence belongs to the ankyrin SOCS box (ASB) family. In terms of assembly, component of a probable ECS E3 ubiquitin-protein ligase complex which contains CUL5, either RBX1 or RNF7/RBX2, Elongin BC complex (ELOB and ELOC) and ASB2. Interacts with SKP2. Through its interaction with SKP2, likely to bridge the formation of dimeric E3-ubiquitin-protein ligase complexes composed of an ECS complex and an SCF(SKP2) complex. Interacts with JAK2; the interaction targets JAK2 for Notch-mediated proteasomal degradation. Interacts with TCF3/E2A; the interaction is mediated by SKP2 and targets TCF3 for Notch-mediated proteasomal degradation. Interacts with DES. In terms of processing, monoubiquitinated.

Its subcellular location is the cytoplasm. The protein localises to the cytoskeleton. It localises to the stress fiber. The protein resides in the myofibril. It is found in the sarcomere. Its subcellular location is the z line. It participates in protein modification; protein ubiquitination. In terms of biological role, substrate-recognition component of a SCF-like ECS (Elongin-Cullin-SOCS-box protein) E3 ubiquitin-protein ligase complex which mediates the ubiquitination and subsequent proteasomal degradation of target proteins. Mediates Notch-induced ubiquitination and degradation of substrates including E2A and JAK2. Required during embryonic heart development for complete heart looping. Required for cardiomyocyte differentiation. Involved in myogenic differentiation and targets filamin FLNB for proteasomal degradation but not filamin FLNA. Also targets DES for proteasomal degradation. Acts as a negative regulator of skeletal muscle mass. The polypeptide is Ankyrin repeat and SOCS box protein 2 (Rattus norvegicus (Rat)).